Reading from the N-terminus, the 262-residue chain is Shikimate dehydrogenase (NADP(+)) (262 aa).

Residues 15–17 (SRS) and T62 each bind shikimate. The Proton acceptor role is filled by K66. Residue E78 participates in NADP(+) binding. N87 and D102 together coordinate shikimate. Residues 126-130 (GAGGA), 150-155 (NRTLAR), and M214 contribute to the NADP(+) site. Y216 is a shikimate binding site. G236 contacts NADP(+).

It belongs to the shikimate dehydrogenase family. Homodimer.

It carries out the reaction shikimate + NADP(+) = 3-dehydroshikimate + NADPH + H(+). It functions in the pathway metabolic intermediate biosynthesis; chorismate biosynthesis; chorismate from D-erythrose 4-phosphate and phosphoenolpyruvate: step 4/7. Involved in the biosynthesis of the chorismate, which leads to the biosynthesis of aromatic amino acids. Catalyzes the reversible NADPH linked reduction of 3-dehydroshikimate (DHSA) to yield shikimate (SA). The sequence is that of Shikimate dehydrogenase (NADP(+)) from Acinetobacter baumannii (strain ATCC 17978 / DSM 105126 / CIP 53.77 / LMG 1025 / NCDC KC755 / 5377).